The sequence spans 276 residues: Undecaprenyl-diphosphatase 1 (276 aa).

The next 8 helical transmembrane spans lie at 1 to 21, 44 to 64, 87 to 107, 114 to 134, 150 to 170, 190 to 210, 222 to 242, and 251 to 271; these read MSLW…LFPV, QLLP…LWYF, GHLM…GLLL, VFHD…LLWL, LTFK…IPGF, AAEF…LLEL, DALL…RFLM, and LASF…WFMF.

This sequence belongs to the UppP family.

The protein localises to the cell inner membrane. The catalysed reaction is di-trans,octa-cis-undecaprenyl diphosphate + H2O = di-trans,octa-cis-undecaprenyl phosphate + phosphate + H(+). Its function is as follows. Catalyzes the dephosphorylation of undecaprenyl diphosphate (UPP). Confers resistance to bacitracin. The chain is Undecaprenyl-diphosphatase 1 from Burkholderia pseudomallei (strain 1106a).